The sequence spans 137 residues: Cytochrome c-type biogenesis protein CcmE (137 aa).

At 1–8 the chain is on the cytoplasmic side; sequence MQKGAKNR. A helical; Signal-anchor for type II membrane protein membrane pass occupies residues 9–29; that stretch reads LITIIICFCSAVIGVSIILYN. At 30–137 the chain is on the periplasmic side; sequence LEKSIVFFVP…NTVIPAKAGI (108 aa). Residues His-120 and Tyr-124 each contribute to the heme site.

It belongs to the CcmE/CycJ family.

It is found in the cell inner membrane. In terms of biological role, heme chaperone required for the biogenesis of c-type cytochromes. Transiently binds heme delivered by CcmC and transfers the heme to apo-cytochromes in a process facilitated by CcmF and CcmH. The protein is Cytochrome c-type biogenesis protein CcmE of Rickettsia bellii (strain OSU 85-389).